A 494-amino-acid chain; its full sequence is Alpha-amylase-related protein (494 aa).

The N-terminal stretch at 1 to 20 is a signal peptide; sequence MFKFALALTLCLAGASLSLA. A Pyrrolidone carboxylic acid modification is found at Q21. The cysteines at positions 48 and 104 are disulfide-linked. Ca(2+) contacts are provided by N118, Q169, and D178. C157 and C171 form a disulfide bridge. R206 is a chloride binding site. The Nucleophile role is filled by D208. H212 is a Ca(2+) binding site. The active-site Proton donor is the E245. Residues N308 and R343 each contribute to the chloride site. Intrachain disulfides connect C376–C382, C418–C441, and C448–C460.

This sequence belongs to the glycosyl hydrolase 13 family. As to quaternary structure, monomer. It depends on Ca(2+) as a cofactor. Chloride is required as a cofactor.

The protein resides in the secreted. It catalyses the reaction Endohydrolysis of (1-&gt;4)-alpha-D-glucosidic linkages in polysaccharides containing three or more (1-&gt;4)-alpha-linked D-glucose units.. The chain is Alpha-amylase-related protein (Amyrel) from Drosophila dossoui (Fruit fly).